The sequence spans 109 residues: Thioredoxin (109 aa).

Positions 2 to 109 (ETLLWKDARE…LVEKIKELFK (108 aa)) constitute a Thioredoxin domain. Cys-27 and Cys-30 are oxidised to a cystine.

Belongs to the thioredoxin family.

Participates in various redox reactions through the reversible oxidation of its active center dithiol to a disulfide and catalyzes dithiol-disulfide exchange reactions. The protein is Thioredoxin (trxA) of Mycoplasmopsis pulmonis (strain UAB CTIP) (Mycoplasma pulmonis).